The primary structure comprises 396 residues: Elongation factor Tu (396 aa).

The tr-type G domain maps to 10-206 (KPHVNIGTIG…AVDSYIPDPE (197 aa)). The segment at 19 to 26 (GHVDHGKT) is G1. 19-26 (GHVDHGKT) is a binding site for GTP. Thr-26 contributes to the Mg(2+) binding site. Residues 60–64 (GITIA) are G2. Residues 81 to 84 (DCPG) form a G3 region. GTP is bound by residues 81 to 85 (DCPGH) and 136 to 139 (NKAD). The interval 136 to 139 (NKAD) is G4. The segment at 174-176 (SAL) is G5.

The protein belongs to the TRAFAC class translation factor GTPase superfamily. Classic translation factor GTPase family. EF-Tu/EF-1A subfamily. As to quaternary structure, monomer.

It is found in the cytoplasm. It catalyses the reaction GTP + H2O = GDP + phosphate + H(+). GTP hydrolase that promotes the GTP-dependent binding of aminoacyl-tRNA to the A-site of ribosomes during protein biosynthesis. The protein is Elongation factor Tu of Pelobacter propionicus (strain DSM 2379 / NBRC 103807 / OttBd1).